The primary structure comprises 180 residues: Putative 3-methyladenine DNA glycosylase (180 aa).

The protein belongs to the DNA glycosylase MPG family.

This Wolbachia pipientis wMel protein is Putative 3-methyladenine DNA glycosylase.